The chain runs to 871 residues: Zinc finger and BTB domain-containing protein 10 (871 aa).

2 disordered regions span residues 1-156 (MSFS…FNGR) and 177-228 (GASL…AGEG). Over residues 14 to 26 (RGGGLVTASGGGS) the composition is skewed to gly residues. Residues 27–37 (TNNNAGGEASA) are compositionally biased toward low complexity. The segment covering 39–56 (PPQPQPRQPPPPAPPALQ) has biased composition (pro residues). Residues 65 to 76 (EEVELEGLEPQD) show a composition bias toward acidic residues. Positions 77–103 (LEASAGPAAGAAEEAKELLLPQDAGGP) are enriched in low complexity. Arginine 126 is modified (omega-N-methylarginine). Over residues 126–135 (RGGGGGGLGN) the composition is skewed to gly residues. Serine 210 carries the phosphoserine modification. Residue lysine 245 forms a Glycyl lysine isopeptide (Lys-Gly) (interchain with G-Cter in SUMO2) linkage. Residues 364-433 (CDVSIVVSGK…LYSGNLVLTS (70 aa)) form the BTB domain. Residues lysine 468, lysine 483, and lysine 497 each participate in a glycyl lysine isopeptide (Lys-Gly) (interchain with G-Cter in SUMO2) cross-link. Serine 565 is modified (phosphoserine). Residues lysine 573, lysine 672, lysine 684, lysine 696, and lysine 706 each participate in a glycyl lysine isopeptide (Lys-Gly) (interchain with G-Cter in SUMO2) cross-link. C2H2-type zinc fingers lie at residues 722-744 (LKCPHCSYVAKYRRTLKRHLLIH) and 750-772 (FSCDICGKLFTRREHVKRHSLVH). Positions 812–871 (SQPGGQEGVDQGQDTEFPRDEEYEENEVGEADEELVDDGEDQNDPSRWDESGEVCMSLDD) are disordered. The span at 830 to 854 (RDEEYEENEVGEADEELVDDGEDQN) shows a compositional bias: acidic residues.

The protein localises to the nucleus. Functionally, may be involved in transcriptional regulation. This chain is Zinc finger and BTB domain-containing protein 10 (ZBTB10), found in Homo sapiens (Human).